Here is a 249-residue protein sequence, read N- to C-terminus: Inner membrane protein pE248R (249 aa).

Residue Gly2 is the site of N-myristoyl glycine; by host attachment. Residues 2–199 lie on the Cytoplasmic side of the membrane; the sequence is GGSTSKNSFK…ADAISAVFKN (198 aa). Residues 200-220 traverse the membrane as a helical segment; sequence IMVAAVVIVVIIVGFIAVFYF. Residues 221-249 lie on the Extracellular side of the membrane; that stretch reads LHSRHRHEEEEEAEPLITSKILKNAAVSQ.

Belongs to the asfivirus E248R family. As to quaternary structure, interacts with A151R.

It is found in the host membrane. It localises to the virion membrane. Essential for viral fusion with host endosomal membrane and core release. The polypeptide is Inner membrane protein pE248R (African swine fever virus (isolate Pig/Kenya/KEN-50/1950) (ASFV)).